The chain runs to 1095 residues: 1-phosphatidylinositol 4,5-bisphosphate phosphodiesterase (1095 aa).

Residues 319-469 form the PI-PLC X-box domain; the sequence is MEMDQPLAHY…LKRKILIKNK (151 aa). Catalysis depends on residues His-334 and His-381. 2 residues coordinate substrate: Lys-467 and Lys-469. The disordered stretch occupies residues 487 to 529; that stretch reads ELKTDDDPEEDASAGKPPEAAAAPAPAPEAAAAAEGAAEGGGG. Over residues 500 to 523 the composition is skewed to low complexity; that stretch reads AGKPPEAAAAPAPAPEAAAAAEGA. Positions 550–666 constitute a PI-PLC Y-box domain; sequence LSSMVNYAQP…GYLLKPDFMR (117 aa). Substrate contacts are provided by Ser-579 and Arg-606. The region spanning 666–794 is the C2 domain; sequence RRADKDFDPF…SLRTEANFPM (129 aa). 2 disordered regions span residues 842–863 and 1000–1030; these read IEEQ…EKKE and QAKM…LREK. Basic and acidic residues-rich tracts occupy residues 852–863 and 1007–1030; these read DAGKAKEEEKKE and TAKE…LREK.

Interacts with inaD. In terms of tissue distribution, abundantly expressed in the adult retina.

The catalysed reaction is a 1,2-diacyl-sn-glycero-3-phospho-(1D-myo-inositol-4,5-bisphosphate) + H2O = 1D-myo-inositol 1,4,5-trisphosphate + a 1,2-diacyl-sn-glycerol + H(+). In terms of biological role, the production of the second messenger molecules diacylglycerol (DAG) and inositol 1,4,5-trisphosphate (IP3) is mediated by activated phosphatidylinositol-specific phospholipase C enzymes. Essential component of the phototransduction pathway. Essential downstream component of a hh-signaling pathway which regulates the Duox-dependent gut immune response to bacterial uracil; required for the activation of Cad99C and consequently Cad99C-dependent endosome formation, which is essential for the Duox-dependent production of reactive oxygen species (ROS) in response to intestinal bacterial infection. The polypeptide is 1-phosphatidylinositol 4,5-bisphosphate phosphodiesterase (Drosophila melanogaster (Fruit fly)).